Here is a 390-residue protein sequence, read N- to C-terminus: Probable protein phosphatase 2C 30 (390 aa).

Polar residues predominate over residues 1–10 (MQLSKNPIKQ). Disordered regions lie at residues 1–20 (MQLSKNPIKQTRNREKNYTD) and 40–85 (PPLV…DSET). The span at 44–61 (FSPTSVKTPLSSPRSSPP) shows a compositional bias: low complexity. Positions 128 to 385 (YYSVYCKRGR…DDISLIIIQL (258 aa)) constitute a PPM-type phosphatase domain. Mn(2+) contacts are provided by D166, G167, D331, and D376.

Belongs to the PP2C family. It depends on Mg(2+) as a cofactor. Mn(2+) serves as cofactor.

It carries out the reaction O-phospho-L-seryl-[protein] + H2O = L-seryl-[protein] + phosphate. It catalyses the reaction O-phospho-L-threonyl-[protein] + H2O = L-threonyl-[protein] + phosphate. In Arabidopsis thaliana (Mouse-ear cress), this protein is Probable protein phosphatase 2C 30 (PP2C5).